The sequence spans 37 residues: Large ribosomal subunit protein bL36 (37 aa).

Belongs to the bacterial ribosomal protein bL36 family.

The polypeptide is Large ribosomal subunit protein bL36 (Metamycoplasma arthritidis (strain 158L3-1) (Mycoplasma arthritidis)).